The sequence spans 143 residues: Mannitol-specific phosphotransferase enzyme IIA component (143 aa).

In terms of domain architecture, PTS EIIA type-2 spans 1–142 (MKLLKNNIYI…DKVLEFLAKH (142 aa)). His-61 serves as the catalytic Tele-phosphohistidine intermediate. A Phosphohistidine; by HPr modification is found at His-61.

The protein localises to the cytoplasm. The phosphoenolpyruvate-dependent sugar phosphotransferase system (sugar PTS), a major carbohydrate active transport system, catalyzes the phosphorylation of incoming sugar substrates concomitantly with their translocation across the cell membrane. The enzyme II CmtAB PTS system is involved in D-mannitol transport. In Mycoplasma pneumoniae (strain ATCC 29342 / M129 / Subtype 1) (Mycoplasmoides pneumoniae), this protein is Mannitol-specific phosphotransferase enzyme IIA component (mtlF).